Consider the following 310-residue polypeptide: Olfactory receptor 7A42 (310 aa).

Over 1–25 the chain is Extracellular; it reads MESGNSTRRIPSFFLLGFSENPHLQ. A glycan (N-linked (GlcNAc...) asparagine) is linked at Asn5. A helical membrane pass occupies residues 26-46; sequence FLIFVLFLSMYLVTVLGNLLI. Over 47–67 the chain is Cytoplasmic; that stretch reads IMVIITQSPLHTPMYFFLANL. A helical membrane pass occupies residues 68–88; the sequence is SFVDICFTSTTVPKMLVNIQT. Over 89–100 the chain is Extracellular; the sequence is QSKAITYADCIS. The cysteines at positions 98 and 190 are disulfide-linked. A helical membrane pass occupies residues 101 to 121; it reads QMSVFLVFAELDNFLLAVMAY. The Cytoplasmic portion of the chain corresponds to 122-135; sequence DRYVAICHPLYYTF. A helical membrane pass occupies residues 136-156; that stretch reads IVNQHLCILMVLLSWVVSILH. The Extracellular portion of the chain corresponds to 157-202; that stretch reads AFLQSSIVLQLTFCGDVKIPHFFCELNQLSQLTCLDSLSSHLIMNL. The chain crosses the membrane as a helical span at residues 203–223; sequence VPVLLAVISFSSILYSYFKIV. Topologically, residues 224 to 240 are cytoplasmic; the sequence is SSICSISSVQGKYTAFS. The chain crosses the membrane as a helical span at residues 241 to 261; the sequence is TCVSHLSIVFLFYSTGLGVYV. The Extracellular portion of the chain corresponds to 262 to 272; it reads SSAVVQSSHSA. Residues 273–293 form a helical membrane-spanning segment; the sequence is ARASVMYTVVTPMLNPFIYSL. At 294 to 310 the chain is on the cytoplasmic side; that stretch reads RNKDVKKALERLLEGKL.

This sequence belongs to the G-protein coupled receptor 1 family.

It localises to the cell membrane. Its function is as follows. Odorant receptor. The polypeptide is Olfactory receptor 7A42 (Mus musculus (Mouse)).